Consider the following 255-residue polypeptide: CCAAT/enhancer-binding protein delta (255 aa).

Disordered regions lie at residues 1-42, 91-121, and 138-206; these read MTCA…AAPA, GGPA…PGSL, and PAAQ…QEMQ. K107 participates in a covalent cross-link: Glycyl lysine isopeptide (Lys-Gly) (interchain with G-Cter in SUMO). Residues 141–161 show a composition bias toward pro residues; that stretch reads QPTPPASPDPPRRSPAPPAPG. Residues 163 to 187 show a composition bias toward basic and acidic residues; that stretch reads ARDKAAGKRGPDRGSPEYRQRRERN. In terms of domain architecture, bZIP spans 177 to 240; sequence SPEYRQRRER…AGLRRFFKQL (64 aa). Residues 181–208 form a basic motif region; it reads RQRRERNNIAVRKSRDKAKRRNQEMQQK. The leucine-zipper stretch occupies residues 212–240; the sequence is LSAENEKLQQRVEQLTRDLAGLRRFFKQL.

It belongs to the bZIP family. C/EBP subfamily. In terms of assembly, binds DNA as a homodimer and as a heterodimer. Can form stable heterodimers with CEBPA, CEBPB and CEBPE. Directly interacts with SPI1/PU.1; this interaction does not affect DNA-binding properties of each partner. Interacts with PRDM16.

It localises to the nucleus. In terms of biological role, transcription activator that recognizes two different DNA motifs: the CCAAT homology common to many promoters and the enhanced core homology common to many enhancers. Important transcription factor regulating the expression of genes involved in immune and inflammatory responses. Transcriptional activator that enhances IL6 transcription alone and as heterodimer with CEBPB. The polypeptide is CCAAT/enhancer-binding protein delta (CEBPD) (Ovis aries (Sheep)).